A 439-amino-acid chain; its full sequence is Probable eukaryotic translation initiation factor 5-1 (439 aa).

Glycine 29–threonine 36 serves as a coordination point for GTP. The disordered stretch occupies residues leucine 143–glutamate 245. Residues proline 147 to serine 186 show a composition bias toward basic and acidic residues. The span at aspartate 214–valine 228 shows a compositional bias: acidic residues. Threonine 232 is modified (phosphothreonine). Over residues threonine 234–glutamate 245 the composition is skewed to basic and acidic residues. Residues lysine 283–glutamate 439 form the W2 domain. Residues serine 434 and serine 436 each carry the phosphoserine modification.

The protein belongs to the eIF-2-beta/eIF-5 family.

Its function is as follows. Catalyzes the hydrolysis of GTP bound to the 40S ribosomal initiation complex (40S.mRNA.Met-tRNA[F].eIF-2.GTP) with the subsequent joining of a 60S ribosomal subunit resulting in the release of eIF-2 and the guanine nucleotide. The subsequent joining of a 60S ribosomal subunit results in the formation of a functional 80S initiation complex (80S.mRNA.Met-tRNA[F]). This chain is Probable eukaryotic translation initiation factor 5-1, found in Arabidopsis thaliana (Mouse-ear cress).